The following is a 344-amino-acid chain: N-acetyl-gamma-glutamyl-phosphate reductase (344 aa).

Residue Cys-149 is part of the active site.

Belongs to the NAGSA dehydrogenase family. Type 1 subfamily.

The protein resides in the cytoplasm. It catalyses the reaction N-acetyl-L-glutamate 5-semialdehyde + phosphate + NADP(+) = N-acetyl-L-glutamyl 5-phosphate + NADPH + H(+). Its pathway is amino-acid biosynthesis; L-arginine biosynthesis; N(2)-acetyl-L-ornithine from L-glutamate: step 3/4. Catalyzes the NADPH-dependent reduction of N-acetyl-5-glutamyl phosphate to yield N-acetyl-L-glutamate 5-semialdehyde. The chain is N-acetyl-gamma-glutamyl-phosphate reductase from Shouchella clausii (strain KSM-K16) (Alkalihalobacillus clausii).